Consider the following 204-residue polypeptide: Holliday junction resolvase RecU (204 aa).

The segment at 1–24 is disordered; sequence MTIHYPNGQQPVQHYNTHNELPTP. Positions 7 to 24 are enriched in polar residues; sequence NGQQPVQHYNTHNELPTP. Residues Thr87, Asp89, Asp102, and Gln121 each coordinate Mg(2+).

The protein belongs to the RecU family. Requires Mg(2+) as cofactor.

The protein localises to the cytoplasm. It catalyses the reaction Endonucleolytic cleavage at a junction such as a reciprocal single-stranded crossover between two homologous DNA duplexes (Holliday junction).. Endonuclease that resolves Holliday junction intermediates in genetic recombination. Cleaves mobile four-strand junctions by introducing symmetrical nicks in paired strands. Promotes annealing of linear ssDNA with homologous dsDNA. Required for DNA repair, homologous recombination and chromosome segregation. The protein is Holliday junction resolvase RecU of Limosilactobacillus reuteri (strain DSM 20016) (Lactobacillus reuteri).